The chain runs to 182 residues: Isopentenyl-diphosphate Delta-isomerase (182 aa).

Mn(2+) is bound by residues H25 and H32. Residues 30-164 enclose the Nudix hydrolase domain; the sequence is LLHLAFSSWL…PWAFSPWMVM (135 aa). C67 is a catalytic residue. H69 contributes to the Mn(2+) binding site. A Mg(2+)-binding site is contributed by E87. Mn(2+)-binding residues include E114 and E116. Residue E116 is part of the active site.

It belongs to the IPP isomerase type 1 family. As to quaternary structure, homodimer. Mg(2+) serves as cofactor. It depends on Mn(2+) as a cofactor.

The protein localises to the cytoplasm. It catalyses the reaction isopentenyl diphosphate = dimethylallyl diphosphate. It participates in isoprenoid biosynthesis; dimethylallyl diphosphate biosynthesis; dimethylallyl diphosphate from isopentenyl diphosphate: step 1/1. Its function is as follows. Catalyzes the 1,3-allylic rearrangement of the homoallylic substrate isopentenyl (IPP) to its highly electrophilic allylic isomer, dimethylallyl diphosphate (DMAPP). The chain is Isopentenyl-diphosphate Delta-isomerase from Escherichia coli (strain ATCC 8739 / DSM 1576 / NBRC 3972 / NCIMB 8545 / WDCM 00012 / Crooks).